Here is an 85-residue protein sequence, read N- to C-terminus: Large ribosomal subunit protein bL27 (85 aa).

A compositionally biased stretch (gly residues) spans 1-10; that stretch reads MAQKKGGGST. A disordered region spans residues 1-20; sequence MAQKKGGGSTRNGRDSKPKM.

This sequence belongs to the bacterial ribosomal protein bL27 family.

The polypeptide is Large ribosomal subunit protein bL27 (Acidovorax ebreus (strain TPSY) (Diaphorobacter sp. (strain TPSY))).